A 251-amino-acid chain; its full sequence is Ubiquinone/menaquinone biosynthesis C-methyltransferase UbiE (251 aa).

Residues Thr74, Asp95, 123-124, and Ser140 contribute to the S-adenosyl-L-methionine site; that span reads NA.

The protein belongs to the class I-like SAM-binding methyltransferase superfamily. MenG/UbiE family.

It catalyses the reaction a 2-demethylmenaquinol + S-adenosyl-L-methionine = a menaquinol + S-adenosyl-L-homocysteine + H(+). The enzyme catalyses a 2-methoxy-6-(all-trans-polyprenyl)benzene-1,4-diol + S-adenosyl-L-methionine = a 5-methoxy-2-methyl-3-(all-trans-polyprenyl)benzene-1,4-diol + S-adenosyl-L-homocysteine + H(+). Its pathway is quinol/quinone metabolism; menaquinone biosynthesis; menaquinol from 1,4-dihydroxy-2-naphthoate: step 2/2. The protein operates within cofactor biosynthesis; ubiquinone biosynthesis. Its function is as follows. Methyltransferase required for the conversion of demethylmenaquinol (DMKH2) to menaquinol (MKH2) and the conversion of 2-polyprenyl-6-methoxy-1,4-benzoquinol (DDMQH2) to 2-polyprenyl-3-methyl-6-methoxy-1,4-benzoquinol (DMQH2). The protein is Ubiquinone/menaquinone biosynthesis C-methyltransferase UbiE of Yersinia pestis bv. Antiqua (strain Angola).